The following is a 78-amino-acid chain: Acyl carrier protein (78 aa).

Residues 2-77 (STIEERVKKI…AAIDYVKAHQ (76 aa)) form the Carrier domain. S37 is modified (O-(pantetheine 4'-phosphoryl)serine).

It belongs to the acyl carrier protein (ACP) family. In terms of processing, 4'-phosphopantetheine is transferred from CoA to a specific serine of apo-ACP by AcpS. This modification is essential for activity because fatty acids are bound in thioester linkage to the sulfhydryl of the prosthetic group.

The protein resides in the cytoplasm. Its pathway is lipid metabolism; fatty acid biosynthesis. Its function is as follows. Carrier of the growing fatty acid chain in fatty acid biosynthesis. The protein is Acyl carrier protein of Pseudomonas putida (strain ATCC 700007 / DSM 6899 / JCM 31910 / BCRC 17059 / LMG 24140 / F1).